We begin with the raw amino-acid sequence, 705 residues long: uncharacterized protein (705 aa).

This is an uncharacterized protein from Acanthamoeba polyphaga (Amoeba).